Here is a 114-residue protein sequence, read N- to C-terminus: Large ribosomal subunit protein bL19 (114 aa).

The protein belongs to the bacterial ribosomal protein bL19 family.

Its function is as follows. This protein is located at the 30S-50S ribosomal subunit interface and may play a role in the structure and function of the aminoacyl-tRNA binding site. This Lactococcus lactis subsp. lactis (strain IL1403) (Streptococcus lactis) protein is Large ribosomal subunit protein bL19.